The chain runs to 438 residues: Trigger factor (438 aa).

Residues 160 to 245 (DDKVTIDFVG…VKKIQQAELP (86 aa)) enclose the PPIase FKBP-type domain.

The protein belongs to the FKBP-type PPIase family. Tig subfamily.

Its subcellular location is the cytoplasm. It catalyses the reaction [protein]-peptidylproline (omega=180) = [protein]-peptidylproline (omega=0). In terms of biological role, involved in protein export. Acts as a chaperone by maintaining the newly synthesized protein in an open conformation. Functions as a peptidyl-prolyl cis-trans isomerase. The sequence is that of Trigger factor from Francisella tularensis subsp. holarctica (strain OSU18).